Reading from the N-terminus, the 575-residue chain is Lysine--tRNA ligase (575 aa).

Mg(2+) is bound by residues Glu-412 and Glu-419.

It belongs to the class-II aminoacyl-tRNA synthetase family. As to quaternary structure, homodimer. Mg(2+) is required as a cofactor.

Its subcellular location is the cytoplasm. It carries out the reaction tRNA(Lys) + L-lysine + ATP = L-lysyl-tRNA(Lys) + AMP + diphosphate. In Bacteroides fragilis (strain ATCC 25285 / DSM 2151 / CCUG 4856 / JCM 11019 / LMG 10263 / NCTC 9343 / Onslow / VPI 2553 / EN-2), this protein is Lysine--tRNA ligase.